The chain runs to 232 residues: MLVSQSANHSINSLSRFGMSSHLNGIGNIVPMVVEQSGMGERAFDIYSRLLRERIIFLGTPIDDAVANTIVAQLLFLDAEDSEKDIQLYINSPGGSVYAGMAIYDTIQQIRPDVVTICFGLAASMGAFLLTAGTKGKRMSLPDSRIMIHQPLGGAQGQAIDIEIQAREILYIKAQLNQLLANHTGQPLERIEADTDRDFFMSAEEAKNYGLIDQVISRQNLPTAGENVTIVK.

The active-site Nucleophile is Ser-124. His-149 is an active-site residue.

This sequence belongs to the peptidase S14 family. As to quaternary structure, fourteen ClpP subunits assemble into 2 heptameric rings which stack back to back to give a disk-like structure with a central cavity, resembling the structure of eukaryotic proteasomes.

The protein localises to the cytoplasm. The enzyme catalyses Hydrolysis of proteins to small peptides in the presence of ATP and magnesium. alpha-casein is the usual test substrate. In the absence of ATP, only oligopeptides shorter than five residues are hydrolyzed (such as succinyl-Leu-Tyr-|-NHMec, and Leu-Tyr-Leu-|-Tyr-Trp, in which cleavage of the -Tyr-|-Leu- and -Tyr-|-Trp bonds also occurs).. Its function is as follows. Cleaves peptides in various proteins in a process that requires ATP hydrolysis. Has a chymotrypsin-like activity. Plays a major role in the degradation of misfolded proteins. The polypeptide is ATP-dependent Clp protease proteolytic subunit 2 (Nostoc sp. (strain PCC 7120 / SAG 25.82 / UTEX 2576)).